The following is a 394-amino-acid chain: tRNA-specific 2-thiouridylase MnmA (394 aa).

ATP contacts are provided by residues A30–S37 and L56. Catalysis depends on C124, which acts as the Nucleophile. Residues C124 and C220 are joined by a disulfide bond. G148 provides a ligand contact to ATP. Positions R170–Q172 are interaction with tRNA. C220 (cysteine persulfide intermediate) is an active-site residue.

The protein belongs to the MnmA/TRMU family.

It is found in the cytoplasm. The enzyme catalyses S-sulfanyl-L-cysteinyl-[protein] + uridine(34) in tRNA + AH2 + ATP = 2-thiouridine(34) in tRNA + L-cysteinyl-[protein] + A + AMP + diphosphate + H(+). Catalyzes the 2-thiolation of uridine at the wobble position (U34) of tRNA, leading to the formation of s(2)U34. This Hyphomonas neptunium (strain ATCC 15444) protein is tRNA-specific 2-thiouridylase MnmA.